The following is an 850-amino-acid chain: Bifunctional levopimaradiene synthase, chloroplastic (850 aa).

Residues 1 to 52 (MALPSSSLSSQIHTGATTQCIPHFHGSLNAGTSAGKRRSLYLRWGKGPSKIV) constitute a chloroplast transit peptide. Lys250 is a substrate binding site. Residues Asp383 and Asp385 each contribute to the Mg(2+) site. A DXDD motif motif is present at residues 383–386 (DIDD). Lys470 is a substrate binding site. Residues Asp602, Asp606, Asn746, Thr750, and Glu754 each coordinate Mg(2+). The DDXXD motif motif lies at 602–606 (DDLYD).

This sequence belongs to the terpene synthase family. Tpsd subfamily. The cofactor is Mg(2+).

It localises to the plastid. The protein resides in the chloroplast. It catalyses the reaction (2E,6E,10E)-geranylgeranyl diphosphate = (+)-copalyl diphosphate. The enzyme catalyses (+)-copalyl diphosphate = abieta-7,13-diene + diphosphate. It carries out the reaction (+)-copalyl diphosphate = abieta-8(14),12-diene + diphosphate. The catalysed reaction is (+)-copalyl diphosphate = neoabietadiene + diphosphate. It functions in the pathway terpene metabolism; oleoresin biosynthesis. Functionally, involved in defensive oleoresin formation in conifers in response to insect attack or other injury. Involved in diterpene (C20) olefins biosynthesis. Bifunctional enzyme that catalyzes two sequential cyclizations of geranylgeranyl diphosphate (GGPP) to levopimaradiene. Levopimaradiene is the major products of the enzyme with abietadiene and neoabietadiene. No activity with farnesyl diphosphate (FPP) as substrate. This chain is Bifunctional levopimaradiene synthase, chloroplastic, found in Pinus contorta (Shore pine).